The chain runs to 279 residues: uncharacterized protein (279 aa).

Transmembrane regions (helical) follow at residues 31–51 (GYIAQALGIADVLAVAYFHAT), 67–87 (LLSIGHYAIALYAALIEAKII), and 115–135 (EITGGSLGHGLGIAVGMSLAL).

It belongs to the transketolase family. It depends on thiamine diphosphate as a cofactor.

It is found in the cell membrane. This is an uncharacterized protein from Sinorhizobium fredii (strain NBRC 101917 / NGR234).